The sequence spans 198 residues: Nucleoid occlusion factor SlmA (198 aa).

Residues 10 to 70 enclose the HTH tetR-type domain; sequence NRREEILQSL…SLIEFIEDSL (61 aa). A DNA-binding region (H-T-H motif) is located at residues 33–52; the sequence is TTAKLAASVGVSEAALYRHF. Residues 117-144 are a coiled coil; it reads EQDRLQGRINQLFERIEAQLRQVLREKR.

This sequence belongs to the nucleoid occlusion factor SlmA family. Homodimer. Interacts with FtsZ.

It localises to the cytoplasm. Its subcellular location is the nucleoid. Required for nucleoid occlusion (NO) phenomenon, which prevents Z-ring formation and cell division over the nucleoid. Acts as a DNA-associated cell division inhibitor that binds simultaneously chromosomal DNA and FtsZ, and disrupts the assembly of FtsZ polymers. SlmA-DNA-binding sequences (SBS) are dispersed on non-Ter regions of the chromosome, preventing FtsZ polymerization at these regions. The chain is Nucleoid occlusion factor SlmA from Salmonella agona (strain SL483).